Reading from the N-terminus, the 360-residue chain is Phospho-N-acetylmuramoyl-pentapeptide-transferase (360 aa).

10 consecutive transmembrane segments (helical) span residues Ala-26 to Lys-46, Gly-70 to Trp-90, Ser-94 to Val-114, Trp-132 to Gly-152, Val-168 to Ser-188, Gly-199 to Thr-219, Ala-236 to Phe-256, Val-263 to Leu-283, Leu-288 to Val-308, and Val-338 to Lys-358.

It belongs to the glycosyltransferase 4 family. MraY subfamily. Requires Mg(2+) as cofactor.

The protein resides in the cell inner membrane. It catalyses the reaction UDP-N-acetyl-alpha-D-muramoyl-L-alanyl-gamma-D-glutamyl-meso-2,6-diaminopimeloyl-D-alanyl-D-alanine + di-trans,octa-cis-undecaprenyl phosphate = di-trans,octa-cis-undecaprenyl diphospho-N-acetyl-alpha-D-muramoyl-L-alanyl-D-glutamyl-meso-2,6-diaminopimeloyl-D-alanyl-D-alanine + UMP. It functions in the pathway cell wall biogenesis; peptidoglycan biosynthesis. In terms of biological role, catalyzes the initial step of the lipid cycle reactions in the biosynthesis of the cell wall peptidoglycan: transfers peptidoglycan precursor phospho-MurNAc-pentapeptide from UDP-MurNAc-pentapeptide onto the lipid carrier undecaprenyl phosphate, yielding undecaprenyl-pyrophosphoryl-MurNAc-pentapeptide, known as lipid I. The polypeptide is Phospho-N-acetylmuramoyl-pentapeptide-transferase (Vibrio parahaemolyticus serotype O3:K6 (strain RIMD 2210633)).